A 270-amino-acid polypeptide reads, in one-letter code: 5'-AMP-activated protein kinase subunit beta-1 (270 aa).

A disordered region spans residues 1 to 43 (MGNTSSERAALERQAGHKTPRRDSSGGTKDGDRPKILMDSPED). A lipid anchor (N-myristoyl glycine) is attached at Gly-2. Residue Thr-4 is modified to Phosphothreonine. A phosphoserine mark is found at Ser-5 and Ser-6. Basic and acidic residues predominate over residues 9 to 36 (AALERQAGHKTPRRDSSGGTKDGDRPKI). Thr-19 carries the phosphothreonine modification. A phosphoserine; by autocatalysis mark is found at Ser-24 and Ser-25. Phosphoserine is present on residues Ser-40, Ser-96, and Ser-101. Residues 68 to 163 (EVNEKAPAQA…QVKKTDFEVF (96 aa)) form a glycogen-binding domain region. Ser-108 carries the post-translational modification Phosphoserine; by autocatalysis. Thr-148 is modified (phosphothreonine). Phosphoserine is present on Ser-182. Lys-201 is subject to N6-succinyllysine.

This sequence belongs to the 5'-AMP-activated protein kinase beta subunit family. As to quaternary structure, AMPK is a heterotrimer of an alpha catalytic subunit (PRKAA1 or PRKAA2), a beta (PRKAB1 or PRKAB2) and a gamma non-catalytic subunits (PRKAG1, PRKAG2 or PRKAG3). Interacts with FNIP1 and FNIP2. Phosphorylated when associated with the catalytic subunit (PRKAA1 or PRKAA2). Phosphorylated by ULK1; leading to negatively regulate AMPK activity and suggesting the existence of a regulatory feedback loop between ULK1 and AMPK. Highly expressed in kidney, heart, white adipose tissue, lung and spleen.

Functionally, non-catalytic subunit of AMP-activated protein kinase (AMPK), an energy sensor protein kinase that plays a key role in regulating cellular energy metabolism. In response to reduction of intracellular ATP levels, AMPK activates energy-producing pathways and inhibits energy-consuming processes: inhibits protein, carbohydrate and lipid biosynthesis, as well as cell growth and proliferation. AMPK acts via direct phosphorylation of metabolic enzymes, and by longer-term effects via phosphorylation of transcription regulators. Also acts as a regulator of cellular polarity by remodeling the actin cytoskeleton; probably by indirectly activating myosin. Beta non-catalytic subunit acts as a scaffold on which the AMPK complex assembles, via its C-terminus that bridges alpha (PRKAA1 or PRKAA2) and gamma subunits (PRKAG1, PRKAG2 or PRKAG3). The polypeptide is 5'-AMP-activated protein kinase subunit beta-1 (Prkab1) (Rattus norvegicus (Rat)).